The primary structure comprises 305 residues: ATP synthase gamma chain (305 aa).

This sequence belongs to the ATPase gamma chain family. As to quaternary structure, F-type ATPases have 2 components, CF(1) - the catalytic core - and CF(0) - the membrane proton channel. CF(1) has five subunits: alpha(3), beta(3), gamma(1), delta(1), epsilon(1). CF(0) has three main subunits: a, b and c.

It is found in the cell membrane. Produces ATP from ADP in the presence of a proton gradient across the membrane. The gamma chain is believed to be important in regulating ATPase activity and the flow of protons through the CF(0) complex. This chain is ATP synthase gamma chain, found in Streptomyces avermitilis (strain ATCC 31267 / DSM 46492 / JCM 5070 / NBRC 14893 / NCIMB 12804 / NRRL 8165 / MA-4680).